A 325-amino-acid polypeptide reads, in one-letter code: GMP reductase (325 aa).

The active-site Thioimidate intermediate is the Cys-174. Residue 203 to 226 (LIADGGIRTHGDIAKSIRFGASMV) participates in NADP(+) binding.

It belongs to the IMPDH/GMPR family. GuaC type 2 subfamily.

It carries out the reaction IMP + NH4(+) + NADP(+) = GMP + NADPH + 2 H(+). Its function is as follows. Catalyzes the irreversible NADPH-dependent deamination of GMP to IMP. It functions in the conversion of nucleobase, nucleoside and nucleotide derivatives of G to A nucleotides, and in maintaining the intracellular balance of A and G nucleotides. The protein is GMP reductase of Staphylococcus aureus (strain bovine RF122 / ET3-1).